The sequence spans 351 residues: Cell shape-determining protein MreB (351 aa).

Residues 20–22 (TAN), 169–171 (GGT), 217–220 (ERIK), and 299–302 (GGAL) each bind ATP.

Belongs to the FtsA/MreB family. As to quaternary structure, forms polymers.

The protein resides in the cytoplasm. Forms membrane-associated dynamic filaments that are essential for cell shape determination. Acts by regulating cell wall synthesis and cell elongation, and thus cell shape. A feedback loop between cell geometry and MreB localization may maintain elongated cell shape by targeting cell wall growth to regions of negative cell wall curvature. This chain is Cell shape-determining protein MreB, found in Pasteurella multocida (strain Pm70).